Here is a 395-residue protein sequence, read N- to C-terminus: Na(+)/H(+) antiporter NhaA 1 (395 aa).

The next 11 helical transmembrane spans lie at 11–31 (FFSS…LAMV), 63–83 (MLLW…GLEV), 99–119 (VFPV…YLAF), 129–149 (GWAI…ALLG), 158–178 (IFLM…IALF), 183–203 (LSML…ALNL), 223–243 (VLKS…MIPL), 258–278 (VLHP…NAGV), 282–302 (GVTL…GLFI), 332–352 (IMAV…IATL), and 364–384 (WAKL…YLIL).

Belongs to the NhaA Na(+)/H(+) (TC 2.A.33) antiporter family.

It localises to the cell inner membrane. The enzyme catalyses Na(+)(in) + 2 H(+)(out) = Na(+)(out) + 2 H(+)(in). Its function is as follows. Na(+)/H(+) antiporter that extrudes sodium in exchange for external protons. This Klebsiella pneumoniae subsp. pneumoniae (strain ATCC 700721 / MGH 78578) protein is Na(+)/H(+) antiporter NhaA 1.